The chain runs to 364 residues: Threonine-phosphate decarboxylase (364 aa).

O-phospho-L-threonine is bound by residues 8–9 (HG), Asn32, and Asn157. Residue Lys216 is modified to N6-(pyridoxal phosphate)lysine. Arg323 and Arg337 together coordinate O-phospho-L-threonine.

It belongs to the class-II pyridoxal-phosphate-dependent aminotransferase family. In terms of assembly, homodimer. Pyridoxal 5'-phosphate is required as a cofactor.

The catalysed reaction is O-phospho-L-threonine + H(+) = (R)-1-aminopropan-2-yl phosphate + CO2. It functions in the pathway cofactor biosynthesis; adenosylcobalamin biosynthesis. Functionally, decarboxylates L-threonine-O-3-phosphate to yield (R)-1-amino-2-propanol O-2-phosphate, the precursor for the linkage between the nucleotide loop and the corrin ring in cobalamin. This is Threonine-phosphate decarboxylase (cobD) from Salmonella typhimurium (strain LT2 / SGSC1412 / ATCC 700720).